The primary structure comprises 1215 residues: Cellulose synthase-like protein D4 (1215 aa).

Disordered regions lie at residues 24 to 46 and 206 to 231; these read GGDAVVRRGSGLTSPVPRHSLGS and SDTDESDSVTDDDDDEAVSSSEERDQ. Acidic residues predominate over residues 207–222; it reads DTDESDSVTDDDDDEA. A run of 2 helical transmembrane segments spans residues 321 to 341 and 352 to 372; these read AILSPYRLLIAIRLVALGFFL and AVWLWAMSVACEVWFAFSWLL. Residues aspartate 452 and aspartate 905 contribute to the active site. The next 6 helical transmembrane spans lie at 988–1008, 1014–1034, 1060–1080, 1114–1134, 1147–1167, and 1177–1197; these read VFLLAYCLLPAVSLFSGKFIV, TFLAFLLVITLTLCLLALLEI, PAAVLQGLLKVIAGVDISFTL, LMVPPVTIMMVNAVAIAVAAA, LLGGAFFSFWVLCHLYPFAKG, and TIVFVWSGLISMIISLLWVYI.

Belongs to the glycosyltransferase 2 family. Plant cellulose synthase-like D subfamily.

It is found in the golgi apparatus membrane. Functionally, thought to be a Golgi-localized beta-glycan synthase that polymerize the backbones of noncellulosic polysaccharides (hemicelluloses) of plant cell wall. This is Cellulose synthase-like protein D4 (CSLD4) from Oryza sativa subsp. japonica (Rice).